The following is a 326-amino-acid chain: Virulence-associated V antigen (326 aa).

It localises to the secreted. Possibly involved in calcium regulation of YOP expression, which includes the export process. In Yersinia pestis, this protein is Virulence-associated V antigen (lcrV).